A 270-amino-acid polypeptide reads, in one-letter code: Shikimate dehydrogenase (NADP(+)) (270 aa).

Residues 14-16 (SKS) and Thr-60 each bind shikimate. The Proton acceptor role is filled by Lys-64. An NADP(+)-binding site is contributed by Glu-76. Shikimate is bound by residues Asn-85 and Asp-101. NADP(+) contacts are provided by residues 125 to 129 (GAGGA), 149 to 154 (NRTASR), and Met-213. Residue Tyr-215 coordinates shikimate. Gly-236 provides a ligand contact to NADP(+).

Belongs to the shikimate dehydrogenase family. In terms of assembly, homodimer.

The catalysed reaction is shikimate + NADP(+) = 3-dehydroshikimate + NADPH + H(+). Its pathway is metabolic intermediate biosynthesis; chorismate biosynthesis; chorismate from D-erythrose 4-phosphate and phosphoenolpyruvate: step 4/7. Functionally, involved in the biosynthesis of the chorismate, which leads to the biosynthesis of aromatic amino acids. Catalyzes the reversible NADPH linked reduction of 3-dehydroshikimate (DHSA) to yield shikimate (SA). The chain is Shikimate dehydrogenase (NADP(+)) from Stutzerimonas stutzeri (strain A1501) (Pseudomonas stutzeri).